A 371-amino-acid chain; its full sequence is Putative HAD-like hydrolase Noc_2718 (371 aa).

The tract at residues 1–288 is HAD-like hydrolase; the sequence is MKQKILLCSD…TGREESAEEE (288 aa). In terms of domain architecture, YcgL spans 291-371; it reads QSCAIYRSCK…QLSSREYRRS (81 aa).

In the N-terminal section; belongs to the HAD-like hydrolase superfamily.

In Nitrosococcus oceani (strain ATCC 19707 / BCRC 17464 / JCM 30415 / NCIMB 11848 / C-107), this protein is Putative HAD-like hydrolase Noc_2718.